A 471-amino-acid chain; its full sequence is WASH complex subunit 1 (471 aa).

The required for WASH complex assembly stretch occupies residues 1 to 54 (MTPTGTQHSLAGQTYAVPLIQPDLRREEAIQQVADALQYLQKVSGDIFSRISQR). A WHD1 region spans residues 1–167 (MTPTGTQHSL…EGLGGLPSNI (167 aa)). Residues 297 to 471 (EDGVLTARPP…GEEDEDDWES (175 aa)) are disordered. Residues 304-336 (RPPPPPPPPPPPAPAVLMSVPPPPPPPQAPPGQ) are compositionally biased toward pro residues. A VCA region spans residues 353–471 (QGAPKEVVDP…GEEDEDDWES (119 aa)). Residues 365–387 (GRATLLESIRQAGGIGKAKLRSV) form the WH2 domain. Positions 386-402 (SVKERKLEKKKQKEQEQ) are enriched in basic and acidic residues. Residues 428–442 (SGKGPGSGASEGPGG) show a composition bias toward gly residues. The segment covering 462 to 471 (GEEDEDDWES) has biased composition (acidic residues).

Belongs to the WASH1 family. Component of the WASH core complex also described as WASH regulatory complex SHRC composed of WASHC1, WASHC2, WASHC3, WASHC4 and WASHC5. The WASH core complex associates with the F-actin-capping protein dimer (formed by CAPZA1, CAPZA2 or CAPZA3 and CAPZB); the assembly has been initially described as WASH complex. Interacts (via WHD1 region) with WASHC2; the interaction is direct. Interacts with alpha-tubulin. Interacts with BECN1; WASHC1 and AMBRA1 can competitively interact with BECN1. Interacts with BLOC1S2; may associate with the BLOC-1 complex. Interacts with tubulin gamma chain (TUBG1 or TUBG2). Interacts with TBC1D23.

It localises to the early endosome membrane. It is found in the recycling endosome membrane. The protein localises to the late endosome. The protein resides in the cytoplasmic vesicle. Its subcellular location is the autophagosome. It localises to the cytoplasm. It is found in the cytoskeleton. The protein localises to the microtubule organizing center. The protein resides in the centrosome. Its subcellular location is the centriole. In terms of biological role, acts as a component of the WASH core complex that functions as a nucleation-promoting factor (NPF) at the surface of endosomes, where it recruits and activates the Arp2/3 complex to induce actin polymerization, playing a key role in the fission of tubules that serve as transport intermediates during endosome sorting. Involved in endocytic trafficking of EGF. Involved in transferrin receptor recycling. Regulates the trafficking of endosomal alpha5beta1 integrin to the plasma membrane and involved in invasive cell migration. In T-cells involved in endosome-to-membrane recycling of receptors including T-cell receptor (TCR), CD28 and ITGAL; proposed to be implicated in T-cell proliferation and effector function. In dendritic cells involved in endosome-to-membrane recycling of major histocompatibility complex (MHC) class II probably involving retromer and subsequently allowing antigen sampling, loading and presentation during T-cell activation. Involved in negative regulation of autophagy independently from its role in endosomal sorting by inhibiting BECN1 ubiquitination to inactivate PIK3C3/Vps34 activity. This Bos taurus (Bovine) protein is WASH complex subunit 1.